A 202-amino-acid chain; its full sequence is Small ribosomal subunit protein uS4 (202 aa).

The disordered stretch occupies residues 15–42 (LGDLPGLTRKAAKRSYPPGQHGQARRKR). The 63-residue stretch at 90–152 (SRLDNICFRL…KGSKQLAEGN (63 aa)) folds into the S4 RNA-binding domain.

Belongs to the universal ribosomal protein uS4 family. As to quaternary structure, part of the 30S ribosomal subunit. Contacts protein S5. The interaction surface between S4 and S5 is involved in control of translational fidelity.

Its function is as follows. One of the primary rRNA binding proteins, it binds directly to 16S rRNA where it nucleates assembly of the body of the 30S subunit. In terms of biological role, with S5 and S12 plays an important role in translational accuracy. The polypeptide is Small ribosomal subunit protein uS4 (Synechococcus sp. (strain CC9902)).